Reading from the N-terminus, the 163-residue chain is Disulfide bond formation protein B (163 aa).

The Cytoplasmic segment spans residues 1–9 (MRLASPRSL). The chain crosses the membrane as a helical span at residues 10–26 (FVIAFLGSALLIAIALY). At 27–44 (MEHVMGLAPCPLCIVQRI) the chain is on the periplasmic side. Cysteines 36 and 39 form a disulfide. A helical membrane pass occupies residues 45–61 (CVIGFGLVCLVAAIHGP). The Cytoplasmic portion of the chain corresponds to 62–67 (AKVGRR). A helical membrane pass occupies residues 68–85 (VYAAIAALFVAAGAATAI). At 86 to 142 (RQIWLQSVPADQLPSCLPSLEYMMEALPFQEIARLVLHGTAECAEVSWTMLGMSIPE) the chain is on the periplasmic side. An intrachain disulfide couples Cys101 to Cys128. Residues 143 to 161 (WSLLGFIGMAIVCLWQLLR) traverse the membrane as a helical segment. At 162–163 (RD) the chain is on the cytoplasmic side.

It belongs to the DsbB family.

It localises to the cell inner membrane. Functionally, required for disulfide bond formation in some periplasmic proteins. Acts by oxidizing the DsbA protein. This chain is Disulfide bond formation protein B, found in Stutzerimonas stutzeri (strain A1501) (Pseudomonas stutzeri).